The sequence spans 214 residues: Putative F-box protein At5g15670 (214 aa).

One can recognise an F-box domain in the interval 22–68 (RNKFDEIPHDLVIEILGRLPAKSVARFLTVSKLWATSIRSLDFIKSY).

The sequence is that of Putative F-box protein At5g15670 from Arabidopsis thaliana (Mouse-ear cress).